The primary structure comprises 465 residues: Sodium-dependent phosphate transport protein 1 (465 aa).

3 N-linked (GlcNAc...) asparagine glycosylation sites follow: Asn-39, Asn-47, and Asn-56. 10 consecutive transmembrane segments (helical) span residues 79-99 (GLIL…VGYL), 117-137 (SLMS…VIVC), 176-196 (FVMG…LLGW), 199-219 (VFYI…FLFF), 260-280 (LPLW…SLLV), 304-324 (LPYL…DFFL), 337-356 (LFTT…LLYL), 363-383 (TVIF…GQLI), 399-419 (VTAL…GLIL), and 429-449 (KIFF…FLFA).

The protein belongs to the major facilitator superfamily. Sodium/anion cotransporter family. In terms of assembly, interacts with PDZK1. As to expression, kidney.

The protein localises to the apical cell membrane. It catalyses the reaction 3 Na(+)(out) + phosphate(out) = 3 Na(+)(in) + phosphate(in). It carries out the reaction urate(out) = urate(in). Functionally, important for the resorption of phosphate by the kidney. May be involved in actively transporting phosphate into cells via Na(+) cotransport in the renal brush border membrane. Plays a role in urate transport in the kidney. This is Sodium-dependent phosphate transport protein 1 (Slc17a1) from Mus musculus (Mouse).